Here is a 339-residue protein sequence, read N- to C-terminus: Intelectin-1 (339 aa).

An N-terminal signal peptide occupies residues 1–18; the sequence is MLSYSLLLLALAFPAGHA. Residues 58–108 form the Fibrinogen C-terminal domain; the sequence is GDMNYGYRSCNEIKSSDSRAPDGIYTLATEDGESYQTFCDMTTNGGGWTLV. A disulfide bond links Cys67 and Cys96. The Ca(2+) site is built by His112, Glu113, Asn115, Gly118, Gly123, Asp124, and Asp159. Intrachain disulfides connect Cys120/Cys306, Cys225/Cys285, and Cys277/Cys291. A glycan (N-linked (GlcNAc...) asparagine) is linked at Asn189. Ca(2+)-binding residues include Asn286, Glu288, Glu300, and Asp308. A carbohydrate-binding positions include 288–289 and Glu300; that span reads EH.

As to quaternary structure, homotrimer; disulfide-linked. Homohexamer; disulfide-linked. Forms primarily homotrimers in solution, but can also form homohexamers. N-glycosylated.

Its subcellular location is the secreted. It localises to the cytoplasmic vesicle. The protein localises to the secretory vesicle. Lectin that specifically recognizes microbial carbohydrate chains in a calcium-dependent manner. Binds to microbial glycans that contain a terminal acyclic 1,2-diol moiety, including beta-linked D-galactofuranose (beta-Galf) and D-phosphoglycerol-modified glycans. Binds to S.pneumoniae serotypes with glycans that contain beta-linked D-galactofuranose (beta-Galf) and with D-phosphoglycerol-modified glycans. Can bind a variety of monosaccharides (in vitro). Probably plays a role in the defense system against microorganisms. The sequence is that of Intelectin-1 (itln1) from Xenopus laevis (African clawed frog).